The chain runs to 142 residues: Large ribosomal subunit protein uL11 (142 aa).

This sequence belongs to the universal ribosomal protein uL11 family. Part of the ribosomal stalk of the 50S ribosomal subunit. Interacts with L10 and the large rRNA to form the base of the stalk. L10 forms an elongated spine to which L12 dimers bind in a sequential fashion forming a multimeric L10(L12)X complex. Post-translationally, one or more lysine residues are methylated.

Functionally, forms part of the ribosomal stalk which helps the ribosome interact with GTP-bound translation factors. This Histophilus somni (strain 129Pt) (Haemophilus somnus) protein is Large ribosomal subunit protein uL11.